Here is a 633-residue protein sequence, read N- to C-terminus: Guanylate-binding protein 6 (633 aa).

The interval 1–310 (MESGPKMLAP…EAINSGAVPC (310 aa)) is GTPase domain (Globular). The region spanning 35–277 (SQPVVVVAIV…FCSYIFTHAR (243 aa)) is the GB1/RHD3-type G domain. Residues 45-52 (GLYRTGKS), 67-69 (LGS), and 97-101 (DTEGL) each bind GTP.

Belongs to the TRAFAC class dynamin-like GTPase superfamily. GB1/RHD3 GTPase family. GB1 subfamily. (Microbial infection) Ubiquitinated by S.flexneri IpaH9.8, leading to its degradation by the proteasome, thereby preventing its ability to promote host defense against bacterial infection.

It localises to the cytoplasmic vesicle. The enzyme catalyses GTP + H2O = GDP + phosphate + H(+). Its function is as follows. Interferon (IFN)-inducible GTPase that plays important roles in innate immunity against a diverse range of bacterial, viral and protozoan pathogens, such as bacterial pathogens Listeria monocytogenes and Mycobacterium bovis BCG as well as the protozoan pathogen Toxoplasma gondii. Confers protection to several pathogens, including the bacterial pathogens Listeria monocytogenes and Mycobacterium bovis BCG as well as the protozoan pathogen Toxoplasma gondii. This Homo sapiens (Human) protein is Guanylate-binding protein 6 (GBP6).